The sequence spans 189 residues: 3-hydroxyanthranilate 3,4-dioxygenase (189 aa).

Arg46 is an O2 binding site. Positions 50, 56, and 94 each coordinate Fe cation. Glu56 is a substrate binding site. Positions 98 and 109 each coordinate substrate. Fe cation is bound by residues Cys124, Cys127, Cys161, and Cys164.

It belongs to the 3-HAO family. In terms of assembly, homodimer. Requires Fe(2+) as cofactor.

It carries out the reaction 3-hydroxyanthranilate + O2 = (2Z,4Z)-2-amino-3-carboxymuconate 6-semialdehyde. Its pathway is cofactor biosynthesis; NAD(+) biosynthesis; quinolinate from L-kynurenine: step 3/3. In terms of biological role, catalyzes the oxidative ring opening of 3-hydroxyanthranilate to 2-amino-3-carboxymuconate semialdehyde, which spontaneously cyclizes to quinolinate. This Shewanella woodyi (strain ATCC 51908 / MS32) protein is 3-hydroxyanthranilate 3,4-dioxygenase.